The primary structure comprises 307 residues: MSMILSASVVRVRDGLPLSASTDCEQSAGVQECRKYFKMLSRKLAQFPDRCTLKTGRHNINFISSLGVSYMMLCTENYPNVLAFSFLDELQKEFITTYNMMKTNTAVRPYCFIEFDNFIQRTKQRYNNPRSLSTKINLSDMQMEIKLRPPYQIPMCELGSANGVTSAFSVDCKGAGKISSAHQRLEPATLSGIVAFILSLLCGALNLIRGFHAIESLLQSDGEDFSYMIAFFLGTAACLYQCYLLVYYTSWRNVKSFLTFGLICLCNMYLYELRNLWQLFFHVTVGAFVTLQIWLRQAQGKAPDHDV.

Serine 2 carries the post-translational modification N-acetylserine. The Cytoplasmic segment spans residues 2–187 (SMILSASVVR…ISSAHQRLEP (186 aa)). Phosphoserine occurs at positions 6 and 8. The region spanning 8–119 (SVVRVRDGLP…YCFIEFDNFI (112 aa)) is the Longin domain. The chain crosses the membrane as a helical span at residues 188–208 (ATLSGIVAFILSLLCGALNLI). Over 209 to 226 (RGFHAIESLLQSDGEDFS) the chain is Lumenal. The chain crosses the membrane as a helical span at residues 227–247 (YMIAFFLGTAACLYQCYLLVY). Over 248–253 (YTSWRN) the chain is Cytoplasmic. A helical membrane pass occupies residues 254-271 (VKSFLTFGLICLCNMYLY). The Lumenal segment spans residues 272-274 (ELR). Residues 275 to 295 (NLWQLFFHVTVGAFVTLQIWL) traverse the membrane as a helical segment. Over 296–307 (RQAQGKAPDHDV) the chain is Cytoplasmic.

Belongs to the synaptobrevin family.

It localises to the endoplasmic reticulum membrane. Its function is as follows. May be involved in vesicle transport between the ER and the Golgi complex. The protein is Vesicle-trafficking protein SEC22a (Sec22a) of Rattus norvegicus (Rat).